The chain runs to 203 residues: Recombination protein RecR (203 aa).

The segment at 58-73 adopts a C4-type zinc-finger fold; sequence CDYCGNLDVVSICNIC. The Toprim domain maps to 81–177; sequence SIIAIVESVA…KISKLASGIP (97 aa).

This sequence belongs to the RecR family.

Functionally, may play a role in DNA repair. It seems to be involved in an RecBC-independent recombinational process of DNA repair. It may act with RecF and RecO. This chain is Recombination protein RecR, found in Orientia tsutsugamushi (strain Boryong) (Rickettsia tsutsugamushi).